We begin with the raw amino-acid sequence, 368 residues long: Cytoskeleton protein RodZ (368 aa).

Topologically, residues 1 to 111 (MNTEASQDQT…LGKKHKKRDG (111 aa)) are cytoplasmic. Positions 19 to 79 (LRQARESLGL…KLVHLPEDEL (61 aa)) constitute an HTH cro/C1-type domain. The segment at residues 30–49 (QQTVAERLCLKVSTIRDIEE) is a DNA-binding region (H-T-H motif). The chain crosses the membrane as a helical; Signal-anchor for type II membrane protein span at residues 112–132 (WLMSFTWLIVLVVLGLTGAWW). At 133-368 (WQNHQAQQAE…RVARLTVGVE (236 aa)) the chain is on the periplasmic side. Positions 151–243 (SAQLSQNGGQ…STEPVDTANT (93 aa)) are disordered. Over residues 193–221 (STSAVTNSATTSSATTSSVPTTSSVPKTT) the composition is skewed to low complexity. The span at 229 to 243 (VPKTNSTEPVDTANT) shows a compositional bias: polar residues.

The protein belongs to the RodZ family.

Its subcellular location is the cell inner membrane. Functionally, cytoskeletal protein that is involved in cell-shape control through regulation of the length of the long axis. This is Cytoskeleton protein RodZ from Yersinia pseudotuberculosis serotype O:3 (strain YPIII).